Consider the following 197-residue polypeptide: Carnitine operon protein CaiE (197 aa).

This sequence belongs to the transferase hexapeptide repeat family.

The protein operates within amine and polyamine metabolism; carnitine metabolism. Its function is as follows. Overproduction of CaiE stimulates the activity of CaiB and CaiD. This Citrobacter koseri (strain ATCC BAA-895 / CDC 4225-83 / SGSC4696) protein is Carnitine operon protein CaiE.